Reading from the N-terminus, the 465-residue chain is Branched-chain amino acid permease BcaP (465 aa).

Helical transmembrane passes span 35–55 (LLGI…TGAV), 57–77 (AGPG…FAAL), 103–123 (LMAF…VSAV), 133–153 (SFLS…PGAV), 159–179 (LFNL…YLGI), 188–208 (IMVI…AVYV), 216–236 (FMPM…FAFI), 258–278 (GIIF…AIMT), 305–325 (VAGI…LVML), 355–375 (PYVA…LVPL), 380–400 (KLVN…VIVL), 413–432 (CPGV…FLIL), and 437–456 (VTIV…YFLY).

This sequence belongs to the amino acid-polyamine-organocation (APC) superfamily.

Its subcellular location is the cell membrane. Its activity is regulated as follows. Isoleucine uptake is efficiently reduced in the presence of 100-fold excess valine, leucine, alanine, threonine, serine, cysteine, asparagine, and a nonproteinaceous amino acid 4-azaleucine. Its function is as follows. Branched-chain amino acid transport system which is involved in the uptake of isoleucine, valine and probably leucine. Can also transport threonine, and is active as a minor serine permease. May be an amino acid permease of rather broad specificity, because several amino acids, albeit at 100-fold excess, are able to prevent isoleucine uptake. Probably does not transport methionine. Together with BraB and BrnQ, plays an important role in the activation of CodY, a branched-chain amino acid-responsive transcriptional regulator that controls the expression of several dozen transcription units in B.subtilis. In Bacillus subtilis (strain 168), this protein is Branched-chain amino acid permease BcaP.